We begin with the raw amino-acid sequence, 147 residues long: Vasopressin-neurophysin 2-copeptin (147 aa).

A disulfide bridge links Cys1 with Cys6. A Glycine amide modification is found at Gly9. 7 disulfides stabilise this stretch: Cys22/Cys66, Cys25/Cys39, Cys33/Cys56, Cys40/Cys46, Cys73/Cys85, Cys79/Cys97, and Cys86/Cys91. A glycan (N-linked (GlcNAc...) asparagine) is linked at Asn114.

This sequence belongs to the vasopressin/oxytocin family. Interacts with vasopressin receptors V1bR/AVPR1B (Ki=85 pM), V1aR/AVPR1A (Ki=0.6 nM) and V2R/AVPR2 (Ki=4.9 nM). Interacts with oxytocin receptor (OXTR) (Ki=110 nM).

It is found in the secreted. Neurophysin 2 specifically binds vasopressin. In terms of biological role, vasopressin has a direct antidiuretic action on the kidney, it also causes vasoconstriction of the peripheral vessels. Acts by binding to vasopressin receptors (V1bR/AVPR1B, V1aR/AVPR1A, and V2R/AVPR2). This Ovis aries (Sheep) protein is Vasopressin-neurophysin 2-copeptin (AVP).